A 2067-amino-acid polypeptide reads, in one-letter code: Negative regulator of mitosis (2067 aa).

Residues 100 to 118 are compositionally biased toward polar residues; sequence SLAIPQTTSQQSNRPSGSE. 3 disordered regions span residues 100–132, 332–408, and 452–480; these read SLAI…STSK, ESIP…DDFA, and GSQS…GFNP. The Nuclear localization signal signature appears at 336–347; that stretch reads SHRKKKRRDTGG. The span at 336–355 shows a compositional bias: basic residues; that stretch reads SHRKKKRRDTGGTRSKRRSS. Residues 384 to 396 show a composition bias toward polar residues; that stretch reads WNASVMSHSQYST. 4 PC repeats span residues 1434–1465, 1482–1520, 1532–1562, and 1625–1659; these read AGIM…ADQE, AAGF…TKNV, GATI…TVRF, and GLCF…ISRL. Residues 2020–2042 are disordered; the sequence is FPSESDEEKRDRQETGSMPSSGH.

Belongs to the APC1 family.

Negative regulator of mitosis in E.nidulans. This protein is part of a regulatory pathway that includes the nimA protein kinase. It is required to prevent premature entry into mitosis. Mutations to this protein both cause cells to enter mitosis and prevent them from leaving mitosis. The polypeptide is Negative regulator of mitosis (bimE) (Emericella nidulans (strain FGSC A4 / ATCC 38163 / CBS 112.46 / NRRL 194 / M139) (Aspergillus nidulans)).